The chain runs to 101 residues: Phosphoprotein OPG062 (101 aa).

The interval 51 to 73 is disordered; sequence PSSPACERRPSSPSRCERMNNPG. Phosphoserine is present on residues Ser-53 and Ser-62. Residues 56–68 are compositionally biased toward basic and acidic residues; the sequence is CERRPSSPSRCER.

This sequence belongs to the orthopoxvirus OPG062 family. As to quaternary structure, self-associates to form high molecular-weight forms. Interacts with protein OPG157. Interacts with host RICTOR and RPTOR; these interactions disrupt the mTORC1 and mTORC2 crosstalk. Post-translationally, phosphorylated on two serines. While these phosphorylations do not play a role in virion assembly; they are essential for the interaction with host RICTOR and RPTOR.

The protein resides in the virion. In terms of biological role, plays an essential role in virion assembly and morphogenesis. Also plays a role in the inhibition of host immune response by dysregulating mTOR. Sequesters host RICTOR and RPTOR, thereby disrupting mTORC1 and mTORC2 crosstalk. In turn, blocks the host antiviral response in part through mTOR-dependent degradation of cGAS, the primary poxvirus sensor. This chain is Phosphoprotein OPG062 (OPG062), found in Homo sapiens (Human).